Here is a 304-residue protein sequence, read N- to C-terminus: Uricase (304 aa).

At A2 the chain carries N-acetylalanine. An N6-acetyllysine; alternate mark is found at K10 and K23. 2 positions are modified to N6-succinyllysine; alternate: K10 and K23. The Charge relay system role is filled by K23. N6-acetyllysine occurs at positions 27 and 36. S39 and S63 each carry phosphoserine. The Charge relay system role is filled by T68. Urate-binding residues include T68 and D69. N6-acetyllysine occurs at positions 118, 122, and 164. F170 is a binding site for urate. Residues K175 and K185 each carry the N6-acetyllysine modification. R187 contacts urate. N6-acetyllysine; alternate occurs at positions 221 and 228. Residues K221 and K228 each carry the N6-succinyllysine; alternate modification. Phosphoserine is present on S232. V235, Q236, and N262 together coordinate urate. H264 functions as the Charge relay system in the catalytic mechanism. K278 carries the N6-acetyllysine modification. Phosphotyrosine is present on Y289. The short motif at 302 to 304 is the Microbody targeting signal element; it reads SRL.

This sequence belongs to the uricase family. Homotetramer.

Its subcellular location is the peroxisome. The catalysed reaction is urate + O2 + H2O = 5-hydroxyisourate + H2O2. Its pathway is purine metabolism; urate degradation; (S)-allantoin from urate: step 1/3. Functionally, catalyzes the oxidation of uric acid to 5-hydroxyisourate, which is further processed to form (S)-allantoin. The chain is Uricase (UOX) from Bos taurus (Bovine).